Consider the following 143-residue polypeptide: Glycine cleavage system H protein 1 (143 aa).

The 82-residue stretch at 26-107 (IYSVGMASIL…PYSSWIAKLK (82 aa)) folds into the Lipoyl-binding domain. The residue at position 67 (Lys-67) is an N6-lipoyllysine.

Belongs to the GcvH family. As to quaternary structure, the glycine cleavage system is composed of four proteins: P, T, L and H. The cofactor is (R)-lipoate.

Its function is as follows. The glycine cleavage system catalyzes the degradation of glycine. The H protein shuttles the methylamine group of glycine from the P protein to the T protein. The sequence is that of Glycine cleavage system H protein 1 from Aquifex aeolicus (strain VF5).